The chain runs to 519 residues: Probable cytochrome P450 6g2 (519 aa).

Cys-460 provides a ligand contact to heme.

Belongs to the cytochrome P450 family. Heme serves as cofactor.

The protein resides in the endoplasmic reticulum membrane. It localises to the microsome membrane. In terms of biological role, may be involved in the metabolism of insect hormones and in the breakdown of synthetic insecticides. This chain is Probable cytochrome P450 6g2 (Cyp6g2), found in Drosophila melanogaster (Fruit fly).